A 102-amino-acid polypeptide reads, in one-letter code: Protein 108 (102 aa).

The signal sequence occupies residues 1–30 (MASVKSSSSSSSSSFISLLLLILLVIVLQS). 4 disulfides stabilise this stretch: C41–C77, C51–C66, C67–C92, and C79–C99.

It belongs to the A9/FIL1 family. In terms of tissue distribution, stamen- and tapetum-specific.

The protein resides in the secreted. The sequence is that of Protein 108 from Solanum lycopersicum (Tomato).